We begin with the raw amino-acid sequence, 82 residues long: Putative membrane protein insertion efficiency factor (82 aa).

Belongs to the UPF0161 family.

The protein localises to the cell membrane. Its function is as follows. Could be involved in insertion of integral membrane proteins into the membrane. This Streptococcus thermophilus (strain ATCC BAA-491 / LMD-9) protein is Putative membrane protein insertion efficiency factor.